Consider the following 191-residue polypeptide: uncharacterized protein (191 aa).

Residues 87–184 (EFDSALIFHY…RIAITFRQMG (98 aa)) enclose the Fe2OG dioxygenase domain.

This is an uncharacterized protein from Acanthamoeba polyphaga mimivirus (APMV).